The following is a 485-amino-acid chain: Aspartyl/glutamyl-tRNA(Asn/Gln) amidotransferase subunit B (485 aa).

Belongs to the GatB/GatE family. GatB subfamily. Heterotrimer of A, B and C subunits.

The catalysed reaction is L-glutamyl-tRNA(Gln) + L-glutamine + ATP + H2O = L-glutaminyl-tRNA(Gln) + L-glutamate + ADP + phosphate + H(+). It carries out the reaction L-aspartyl-tRNA(Asn) + L-glutamine + ATP + H2O = L-asparaginyl-tRNA(Asn) + L-glutamate + ADP + phosphate + 2 H(+). Allows the formation of correctly charged Asn-tRNA(Asn) or Gln-tRNA(Gln) through the transamidation of misacylated Asp-tRNA(Asn) or Glu-tRNA(Gln) in organisms which lack either or both of asparaginyl-tRNA or glutaminyl-tRNA synthetases. The reaction takes place in the presence of glutamine and ATP through an activated phospho-Asp-tRNA(Asn) or phospho-Glu-tRNA(Gln). This is Aspartyl/glutamyl-tRNA(Asn/Gln) amidotransferase subunit B from Ruminiclostridium cellulolyticum (strain ATCC 35319 / DSM 5812 / JCM 6584 / H10) (Clostridium cellulolyticum).